Reading from the N-terminus, the 114-residue chain is MAPRSLYLLAILLFSANLFAGVGFAAAADESASNVIVKGGKGKEREDGPEEPEETGPEETGPEETGPEETGPEETGPEETGPEETEPEPEPGAATLKSVALPFAVAAAALVAAF.

An N-terminal signal peptide occupies residues M1–A27. Residues S33–T95 form a disordered region. The span at D47–P89 shows a compositional bias: acidic residues. 7 tandem repeats follow at residues G48–P52, G56–T60, G61–T65, G66–T70, G71–T75, G76–T80, and G81–T85. The 7 X 5 AA tandem repeats of G-P-E-E-[PT] stretch occupies residues G48–T85. G92 is lipidated: GPI-anchor amidated glycine. Residues A93–F114 constitute a propeptide that is removed on maturation.

The protein resides in the cell membrane. Its function is as follows. Major surface antigen of procyclic forms. The polypeptide is Procyclic form-specific polypeptide A-alpha (PARPA-ALPHA) (Trypanosoma brucei brucei).